The chain runs to 165 residues: RNA pyrophosphohydrolase (165 aa).

One can recognise a Nudix hydrolase domain in the interval 13–154 (PYRQGVGIML…KRPVYEQVVA (142 aa)). The Nudix box motif lies at 46 to 67 (GGIDAGEDPETAAWREMEEEIG).

The protein belongs to the Nudix hydrolase family. RppH subfamily. A divalent metal cation serves as cofactor.

Functionally, accelerates the degradation of transcripts by removing pyrophosphate from the 5'-end of triphosphorylated RNA, leading to a more labile monophosphorylated state that can stimulate subsequent ribonuclease cleavage. The sequence is that of RNA pyrophosphohydrolase from Rhodospirillum rubrum (strain ATCC 11170 / ATH 1.1.1 / DSM 467 / LMG 4362 / NCIMB 8255 / S1).